The primary structure comprises 110 residues: Glutaredoxin-1 (110 aa).

One can recognise a Glutaredoxin domain in the interval 7-110 (IKHVKDLIAE…EELLEPILAN (104 aa)). A Glycyl lysine isopeptide (Lys-Gly) (interchain with G-Cter in ubiquitin) cross-link involves residue K11. Residues 24–29 (KTYCPY), Q63, V75, and 88–89 (ND) contribute to the glutathione site. C27 is modified (S-glutathionyl cysteine; alternate). A disulfide bridge connects residues C27 and C30.

It belongs to the glutaredoxin family.

It localises to the cytoplasm. Its subcellular location is the nucleus. The catalysed reaction is 2 glutathione + H2O2 = glutathione disulfide + 2 H2O. It catalyses the reaction 1-chloro-2,4-dinitrobenzene + glutathione = 2,4-dinitrophenyl-S-glutathione + chloride + H(+). The enzyme catalyses RX + glutathione = an S-substituted glutathione + a halide anion + H(+). In terms of biological role, component of the glutathione system which performs several activities such as glutathione-dependent oxidoreductase, glutathione peroxidase and glutathione S-transferase (GST) activity. The disulfide bond functions as an electron carrier in the glutathione-dependent synthesis of deoxyribonucleotides by the enzyme ribonucleotide reductase. In addition, it is also involved in reducing cytosolic protein- and non-protein-disulfides in a coupled system with glutathione reductase. Required for resistance to reactive oxygen species (ROS) by directly reducing hydroperoxides and for the detoxification of ROS-mediated damage. GRX1 is less active as an oxidoreductase than GRX2. In Saccharomyces cerevisiae (strain ATCC 204508 / S288c) (Baker's yeast), this protein is Glutaredoxin-1 (GRX1).